A 612-amino-acid chain; its full sequence is Coagulation factor XII (612 aa).

The signal sequence occupies residues 1–19; sequence MRALLLLGALLVSLESTVS. The region spanning 42–90 is the Fibronectin type-II domain; sequence VTGEPCHFPFQYHRQLHHKCIHRGRPGPRPWCATTPNFEKDQRWAYCLE. Intrachain disulfides connect Cys47/Cys73, Cys61/Cys88, Cys98/Cys110, Cys104/Cys119, Cys121/Cys130, Cys135/Cys163, Cys161/Cys170, Cys178/Cys189, Cys183/Cys198, Cys200/Cys209, Cys217/Cys306, Cys240/Cys288, Cys268/Cys301, Cys355/Cys482, Cys393/Cys409, Cys401/Cys471, Cys432/Cys435, Cys498/Cys566, Cys529/Cys545, and Cys556/Cys587. Residues 94 to 131 enclose the EGF-like 1 domain; that stretch reads VKDHCSKHNPCQKGGTCVNMPDGPRCICADHFTGKHCQ. Thr109 is a glycosylation site (O-linked (Fuc) threonine). In terms of domain architecture, Fibronectin type-I spans 133–173; the sequence is EKCFEPQFFRFFHENEIWHRLEPAGVVKCQCKGPNAQCKPL. The EGF-like 2 domain maps to 174–210; it reads ASQVCRTNPCLNGGSCLQAEGHRLCRCAPSFAGRLCD. The 90-residue stretch at 217-306 folds into the Kringle domain; sequence CYDDRDRGLS…SWNYCRLAPC (90 aa). N-linked (GlcNAc...) asparagine glycosylation is found at Asn251 and Asn282. The Peptidase S1 domain maps to 369 to 611; sequence VVGGLVALPG…YLAWIREHTA (243 aa). His408 serves as the catalytic Charge relay system. Asn429 carries an N-linked (GlcNAc...) asparagine glycan. Asp457 acts as the Charge relay system in catalysis. Residue Ser560 is the Charge relay system of the active site.

It belongs to the peptidase S1 family. In terms of assembly, interacts with HRG; the interaction, which is enhanced in the presence of zinc ions and inhibited by heparin-binding, inhibits factor XII autoactivation and contact-initiated coagulation. In terms of processing, O- and N-glycosylated.

The protein localises to the secreted. It carries out the reaction Selective cleavage of Arg-|-Ile bonds in factor VII to form factor VIIa and factor XI to form factor XIa.. Activity is promoted in the presence of negatively charged surfaces. Factor XII is a serum glycoprotein that participates in the initiation of blood coagulation, fibrinolysis, and the generation of bradykinin and angiotensin. Prekallikrein is cleaved by factor XII to form kallikrein, which then cleaves factor XII first to alpha-factor XIIa and then to beta-factor XIIa. Alpha-factor XIIa activates factor XI to factor XIa. The protein is Coagulation factor XII (F12) of Bos taurus (Bovine).